Consider the following 596-residue polypeptide: Elongation factor 4 (596 aa).

The tr-type G domain occupies 2–184 (DHIRNFSIIA…AVVARIPPPK (183 aa)). GTP is bound by residues 14–19 (DHGKST) and 131–134 (NKID).

It belongs to the TRAFAC class translation factor GTPase superfamily. Classic translation factor GTPase family. LepA subfamily.

Its subcellular location is the cell inner membrane. It catalyses the reaction GTP + H2O = GDP + phosphate + H(+). Required for accurate and efficient protein synthesis under certain stress conditions. May act as a fidelity factor of the translation reaction, by catalyzing a one-codon backward translocation of tRNAs on improperly translocated ribosomes. Back-translocation proceeds from a post-translocation (POST) complex to a pre-translocation (PRE) complex, thus giving elongation factor G a second chance to translocate the tRNAs correctly. Binds to ribosomes in a GTP-dependent manner. The protein is Elongation factor 4 of Dechloromonas aromatica (strain RCB).